We begin with the raw amino-acid sequence, 372 residues long: 4-hydroxy-3-methylbut-2-en-1-yl diphosphate synthase (flavodoxin) (372 aa).

Positions 270, 273, 305, and 312 each coordinate [4Fe-4S] cluster.

This sequence belongs to the IspG family. [4Fe-4S] cluster serves as cofactor.

The enzyme catalyses (2E)-4-hydroxy-3-methylbut-2-enyl diphosphate + oxidized [flavodoxin] + H2O + 2 H(+) = 2-C-methyl-D-erythritol 2,4-cyclic diphosphate + reduced [flavodoxin]. It participates in isoprenoid biosynthesis; isopentenyl diphosphate biosynthesis via DXP pathway; isopentenyl diphosphate from 1-deoxy-D-xylulose 5-phosphate: step 5/6. Converts 2C-methyl-D-erythritol 2,4-cyclodiphosphate (ME-2,4cPP) into 1-hydroxy-2-methyl-2-(E)-butenyl 4-diphosphate. The protein is 4-hydroxy-3-methylbut-2-en-1-yl diphosphate synthase (flavodoxin) of Alcanivorax borkumensis (strain ATCC 700651 / DSM 11573 / NCIMB 13689 / SK2).